A 477-amino-acid chain; its full sequence is MTQIELSCSAVHIIGAGLAGSEAAWQVANHGVRVVLHEMRPHRMTAAHQTGGLAELVCSNSFRSDDAANNAVGLLHAEMRRLGSLIMRCADANQVPAGGALAVDRDGFSSAVTKALDDHPLIEINRTEVDGLPPADWRNVIVATGPLTSAPLAAAIRALTDESALAFFDAIAPIVHRDSIDMSKAWFQSRYDKVGPGGTGADYINCPMTEAQYHAFVDALIEGEKVDFKDWEIDTPYFDGCLPIEIMAERGRETLRHGPMKPVGLTNPHDPTVKPYAIVQLRQDNRLGTLYNIVGFQTKLKHGAQTRVFRTIPGLETAEFARLGGLHRNTFLNSPKLLDTQLRLRAEPRLRFAGQMTGCEGYVESAAIGLIAGLYAASDARARSLAAPPPTTALGALLGHITGGHIESIDAGPRSFQPMNINFGLFPPLANPPAKKPDGTRLRGNEKTIAKKQAISARALADLDRWIADALRVAAAA.

15-20 (GAGLAG) contributes to the FAD binding site.

This sequence belongs to the MnmG family. TrmFO subfamily. FAD is required as a cofactor.

It localises to the cytoplasm. The enzyme catalyses uridine(54) in tRNA + (6R)-5,10-methylene-5,6,7,8-tetrahydrofolate + NADH + H(+) = 5-methyluridine(54) in tRNA + (6S)-5,6,7,8-tetrahydrofolate + NAD(+). It carries out the reaction uridine(54) in tRNA + (6R)-5,10-methylene-5,6,7,8-tetrahydrofolate + NADPH + H(+) = 5-methyluridine(54) in tRNA + (6S)-5,6,7,8-tetrahydrofolate + NADP(+). In terms of biological role, catalyzes the folate-dependent formation of 5-methyl-uridine at position 54 (M-5-U54) in all tRNAs. In Nitrobacter hamburgensis (strain DSM 10229 / NCIMB 13809 / X14), this protein is Methylenetetrahydrofolate--tRNA-(uracil-5-)-methyltransferase TrmFO.